The following is a 325-amino-acid chain: ATP synthase subunit gamma, mitochondrial (325 aa).

The N-terminal 42 residues, 1–42, are a transit peptide targeting the mitochondrion; that stretch reads MAMAVFRREGRRLLPSIAARPIAAIRSPLSSDQEEGLLGVRS.

The protein belongs to the ATPase gamma chain family. F-type ATPases have 2 components, CF(1) - the catalytic core - and CF(0) - the membrane proton channel. CF(1) has five subunits: alpha(3), beta(3), gamma(1), delta(1), epsilon(1). CF(0) has three main subunits: a, b and c.

The protein resides in the mitochondrion. It is found in the mitochondrion inner membrane. Its function is as follows. Mitochondrial membrane ATP synthase (F(1)F(0) ATP synthase or Complex V) produces ATP from ADP in the presence of a proton gradient across the membrane which is generated by electron transport complexes of the respiratory chain. F-type ATPases consist of two structural domains, F(1) - containing the extramembraneous catalytic core, and F(0) - containing the membrane proton channel, linked together by a central stalk and a peripheral stalk. During catalysis, ATP synthesis in the catalytic domain of F(1) is coupled via a rotary mechanism of the central stalk subunits to proton translocation. Part of the complex F(1) domain and the central stalk which is part of the complex rotary element. The gamma subunit protrudes into the catalytic domain formed of alpha(3)beta(3). Rotation of the central stalk against the surrounding alpha(3)beta(3) subunits leads to hydrolysis of ATP in three separate catalytic sites on the beta subunits. This is ATP synthase subunit gamma, mitochondrial (ATPC) from Arabidopsis thaliana (Mouse-ear cress).